A 573-amino-acid chain; its full sequence is Probable D-xylulose kinase A (573 aa).

The substrate site is built by H97, R168, D284, and N285. Residues W366, 471–472 (GG), and N475 contribute to the ATP site.

This sequence belongs to the FGGY kinase family.

The protein localises to the cytoplasm. It carries out the reaction D-xylulose + ATP = D-xylulose 5-phosphate + ADP + H(+). In terms of biological role, highly specific D-xylulose kinase which participates in the catabolism of xylose. Xylose is a major component of hemicelluloses such as xylan. Most fungi utilize D-xylose via three enzymatic reactions, xylose reductase (XR), xylitol dehydrogenase (XDH), and xylulokinase, to form xylulose 5-phosphate, which enters pentose phosphate pathway. This is Probable D-xylulose kinase A (xkiA) from Neosartorya fischeri (strain ATCC 1020 / DSM 3700 / CBS 544.65 / FGSC A1164 / JCM 1740 / NRRL 181 / WB 181) (Aspergillus fischerianus).